Here is an 81-residue protein sequence, read N- to C-terminus: Small ribosomal subunit protein eS21 (81 aa).

This sequence belongs to the eukaryotic ribosomal protein eS21 family. As to quaternary structure, component of the 40S small ribosomal subunit.

Its subcellular location is the cytoplasm. The protein localises to the cytosol. It is found in the rough endoplasmic reticulum. In terms of biological role, component of the small ribosomal subunit. The ribosome is a large ribonucleoprotein complex responsible for the synthesis of proteins in the cell. The sequence is that of Small ribosomal subunit protein eS21 (rps21) from Danio rerio (Zebrafish).